We begin with the raw amino-acid sequence, 285 residues long: 2,3,4,5-tetrahydropyridine-2,6-dicarboxylate N-succinyltransferase (285 aa).

Residues arginine 111 and aspartate 148 each contribute to the substrate site.

It belongs to the transferase hexapeptide repeat family. As to quaternary structure, homotrimer.

It is found in the cytoplasm. The enzyme catalyses (S)-2,3,4,5-tetrahydrodipicolinate + succinyl-CoA + H2O = (S)-2-succinylamino-6-oxoheptanedioate + CoA. It participates in amino-acid biosynthesis; L-lysine biosynthesis via DAP pathway; LL-2,6-diaminopimelate from (S)-tetrahydrodipicolinate (succinylase route): step 1/3. In Sinorhizobium fredii (strain NBRC 101917 / NGR234), this protein is 2,3,4,5-tetrahydropyridine-2,6-dicarboxylate N-succinyltransferase.